The following is a 1257-amino-acid chain: MAASTSTSSLSVVGTNLSLPPHRHHRHFHSPSSISTRIRTNRLFLSSSLAFSSPRDARVVHAGLGLRRNTPDVWKHYSSVLSQPTAPVPVRQSCTSCCLASAKKRRSNLPRFVPGAFFDSSSFGLSKDKLRHASVKRVQLPHATVGPDEPHAASTTWQEGVAEKQDLSLFDSELERLEGFLGSELPSHPKLHRGQLKNGIRYLILPNKVPPTRFEAHMEVHVGSIDEEDDEQGIAHMIEHVAFLGSKKREKLLGTGARSNAYTDFHHTVFHIHSPTSTKDSDDLLPSVLDALNEITFHPNFLASRIEKERRAILSELQMMNTIEYRVDCQLLQHLHSENKLSKRFPIGLEEQIKKWDADKIRKFHERWYFPANATLYIVGDIGNIPKTVNQIEAVFGQTGVDNEKGSVATSSAFGAMASFLVPKLSVGLGGNSIERPTNTTDQSKVFKKERHAVRPPVKHTWSLPGSSANLKPPQIFQHELLQNFSINMFCKIPVNKVQTYRDLRIVLMKRIFLSALHFRINTRYKSSNPPFTSVELDHSDSGREGCTVTTLTITAEPKNWQNAIRVAVHEVRRLKEFGVTQGELTRYLDALLRDSEHLAAMIDNVSSVDNLDFIMESDALGHKVMDQSQGHESLIAVAGTVTLDEVNSVGAQVLEFIADFGKLSAPLPAAIVACVPKKVHIEGAGETEFKISSTEITDAMKAGLDEPIEPEPELEVPKELVQSSTLQELKNQRKPAFIPVSPEIEAKKLHDEETGITRLRLANGIPVNYKISKSETQSGVMRLIVGGGRAAEGSDSRGSVIVGVRTLSEGGRVGNFSREQVELFCVNNQINCSLESTEEFISLEFRFTLRNNGMRAAFQLLHMVLEHSVWSDDALDRARQVYLSYYRSIPKSLERSTAHKLMVAMLDGDERFTEPTPSSLENLTLQSVKDAVMNQFVGNNMEVSIVGDFTEEEIESCILDYLGTAQATGNFKNQQQIIPPTFRLSPSSLQSQEVFLNDTDERACAYIAGPAPNRWGFTADGNDLLETIDNASSVNNNGTKSDALQTEGAPRRSLRSHPLFFGITMGLLSEIINSRLFTTVRDSLGLTYDVSFELNLFDRLKLGWYVVSVTSTPSKVHKAVDACKNVLRGLHSNGITVRELDRAKRTLLMRHEAEIKSNAYWLGLLAHLQSSSVPRKDLSCIKDLTSLYEAATIEDTCLAYEQLKVDEDSLYSCIGVSGAQAAQDIAAPVEEEEAGEGYPGVLPMGRGLSTMTRPTT.

The transit peptide at 1–142 directs the protein to the chloroplast; it reads MAASTSTSSL…ASVKRVQLPH (142 aa). His-236 lines the Zn(2+) pocket. The Proton acceptor role is filled by Glu-239. A Zn(2+)-binding site is contributed by His-240. Glu-309 is a catalytic residue. Glu-316 contributes to the Zn(2+) binding site. The segment at 1233–1257 is disordered; sequence EEAGEGYPGVLPMGRGLSTMTRPTT.

Belongs to the peptidase M16 family. Zn(2+) serves as cofactor.

Its subcellular location is the plastid. It localises to the chloroplast stroma. Cleaves presequences (transit peptides) from chloroplastic protein precursors. Initially recognizes a precursor by binding to the C-terminus of its transit peptide and then removes the transit peptide in a single endoproteolytic step. In a next step, pursues the cleavage of transit peptide to a subfragment form. This chain is Stromal processing peptidase, chloroplastic, found in Pisum sativum (Garden pea).